Reading from the N-terminus, the 334-residue chain is Ornithine carbamoyltransferase subunit I (334 aa).

Carbamoyl phosphate is bound by residues 56-59, glutamine 83, arginine 107, and 134-137; these read STRT and HPTQ. L-ornithine contacts are provided by residues asparagine 168, aspartate 232, and 236–237; that span reads SM. Position 274 (cysteine 274) interacts with Zn(2+). Carbamoyl phosphate is bound by residues 274 to 275 and arginine 320; that span reads CL.

It belongs to the aspartate/ornithine carbamoyltransferase superfamily. OTCase family. As to quaternary structure, in E.coli strain K12, trimer of identical or non-identical chains are composed of ArgI (I) and/or ArgF (F). The trimer has the following composition: FFI, FFF, FII, III. E.coli strains B and W, which are known to contain only ArgI, produce only a trimer of identical chains (III).

The protein resides in the cytoplasm. The enzyme catalyses carbamoyl phosphate + L-ornithine = L-citrulline + phosphate + H(+). The protein operates within amino-acid biosynthesis; L-arginine biosynthesis; L-arginine from L-ornithine and carbamoyl phosphate: step 1/3. With respect to regulation, reversely inhibited by N-(N-Sulfodiaminophosphinyl)-L-ornithine. Zinc is an allosteric regulator of the substrate-bound enzyme and a competitive inhibitor of the free enzyme. Functionally, reversibly catalyzes the transfer of the carbamoyl group from carbamoyl phosphate (CP) to the N(epsilon) atom of ornithine (ORN) to produce L-citrulline, which is a substrate for argininosuccinate synthetase, the enzyme involved in the final step in arginine biosynthesis. The polypeptide is Ornithine carbamoyltransferase subunit I (Escherichia coli (strain K12)).